Here is a 426-residue protein sequence, read N- to C-terminus: MNALNIAEYTHTLGLQAKTASAQMARAPAAIKNKALLALARLLRQNVDALQGDNARDLERARAAGLAEPMVDRLKLTPKVLETCAQGCEQLAAMPDIIGEIQGMKQQPSGIRVGQMRVPIGVFGMIYESRPNVTIEAASLSIKSGNACILRGGSEAIDSNKALARLVAQALAEAGLPEHGVQLVQTTDRAAVGQLIAMPQYVDVIIPRGGKGLIERISAEAKVPVIKHLDGNCHTYVDDPCDIVMAVQVADNAKTQKYSPCNASEGLLVARGVAAQFLPQIGAVYAAKGVEMRGCPEALAILRAVPGVQLAEATEADWSEEYLAPIISVKVVAGVDEAIAHINRYGSHHTDAILTRDHMHAQQFLRDVDSASVMVNASTRFADGFEYGLGAEIGISTDKFHARGPVGIEGLTSLKWVVLGEGEVRT.

Belongs to the gamma-glutamyl phosphate reductase family.

The protein localises to the cytoplasm. The enzyme catalyses L-glutamate 5-semialdehyde + phosphate + NADP(+) = L-glutamyl 5-phosphate + NADPH + H(+). Its pathway is amino-acid biosynthesis; L-proline biosynthesis; L-glutamate 5-semialdehyde from L-glutamate: step 2/2. Functionally, catalyzes the NADPH-dependent reduction of L-glutamate 5-phosphate into L-glutamate 5-semialdehyde and phosphate. The product spontaneously undergoes cyclization to form 1-pyrroline-5-carboxylate. The sequence is that of Gamma-glutamyl phosphate reductase from Acidovorax ebreus (strain TPSY) (Diaphorobacter sp. (strain TPSY)).